We begin with the raw amino-acid sequence, 595 residues long: Ketol-acid reductoisomerase, chloroplastic (595 aa).

A chloroplast-targeting transit peptide spans methionine 1–methionine 72. In terms of domain architecture, KARI N-terminal Rossmann spans valine 108–threonine 306. Residues glycine 129–glutamine 136, arginine 162–serine 167, and serine 201–glutamine 205 contribute to the NADP(+) site. Histidine 226 is an active-site residue. KARI C-terminal knotted domains lie at threonine 307–glycine 455 and aspartate 456–leucine 592. Mg(2+) contacts are provided by aspartate 315, glutamate 319, glutamate 492, and glutamate 496. Serine 518 lines the substrate pocket.

Belongs to the ketol-acid reductoisomerase family. In terms of assembly, homodimer. Mg(2+) serves as cofactor.

The protein resides in the plastid. The protein localises to the chloroplast. It carries out the reaction (2R)-2,3-dihydroxy-3-methylbutanoate + NADP(+) = (2S)-2-acetolactate + NADPH + H(+). The enzyme catalyses (2R,3R)-2,3-dihydroxy-3-methylpentanoate + NADP(+) = (S)-2-ethyl-2-hydroxy-3-oxobutanoate + NADPH + H(+). The protein operates within amino-acid biosynthesis; L-isoleucine biosynthesis; L-isoleucine from 2-oxobutanoate: step 2/4. It participates in amino-acid biosynthesis; L-valine biosynthesis; L-valine from pyruvate: step 2/4. This is Ketol-acid reductoisomerase, chloroplastic (AHRI) from Spinacia oleracea (Spinach).